We begin with the raw amino-acid sequence, 399 residues long: Alpha-tubulin N-acetyltransferase (399 aa).

The 178-residue stretch at 1-178 folds into the N-acetyltransferase domain; that stretch reads MEFNFIINKL…NNFVVFDQYF (178 aa). Residues 112–125 and 148–157 each bind acetyl-CoA; these read FYVH…GYGK and SPKLIAFLKK. The span at 183–193 shows a compositional bias: polar residues; the sequence is SSQNKQNQNTR. A disordered region spans residues 183–223; sequence SSQNKQNQNTRSYSQPYSDYSSQIPTNYPQQQQQQSNSKSY. Over residues 194–223 the composition is skewed to low complexity; the sequence is SYSQPYSDYSSQIPTNYPQQQQQQSNSKSY.

This sequence belongs to the acetyltransferase ATAT1 family.

The catalysed reaction is L-lysyl-[alpha-tubulin] + acetyl-CoA = N(6)-acetyl-L-lysyl-[alpha-tubulin] + CoA + H(+). Its function is as follows. Specifically acetylates 'Lys-40' in alpha-tubulin on the lumenal side of microtubules. Promotes microtubule destabilization and accelerates microtubule dynamics; this activity may be independent of acetylation activity. Acetylates alpha-tubulin with a slow enzymatic rate, due to a catalytic site that is not optimized for acetyl transfer. Enters the microtubule through each end and diffuses quickly throughout the lumen of microtubules. Acetylates only long/old microtubules because of its slow acetylation rate since it does not have time to act on dynamically unstable microtubules before the enzyme is released. This is Alpha-tubulin N-acetyltransferase from Tetrahymena thermophila (strain SB210).